The chain runs to 421 residues: ATP-dependent RNA helicase RhlB (421 aa).

Positions 9-37 match the Q motif motif; sequence QKFSDFALHPQVVEALEKKGFYNCTPIQA. The Helicase ATP-binding domain occupies 40–219; that stretch reads LPLTLAGRDV…FEQMNNAEYV (180 aa). An ATP-binding site is contributed by 53–60; sequence AQTGTGKT. A DEAD box motif is present at residues 165–168; the sequence is DEAD. A Helicase C-terminal domain is found at 245-390; it reads RLLQTLIEEE…VSKYNPEALM (146 aa). The disordered stretch occupies residues 396–421; sequence PLRLTRSRPGNGPRRAGAPRNRRRSG. Residues 402-414 are compositionally biased toward low complexity; sequence SRPGNGPRRAGAP.

This sequence belongs to the DEAD box helicase family. RhlB subfamily. Component of the RNA degradosome, which is a multiprotein complex involved in RNA processing and mRNA degradation.

It is found in the cytoplasm. The enzyme catalyses ATP + H2O = ADP + phosphate + H(+). DEAD-box RNA helicase involved in RNA degradation. Has RNA-dependent ATPase activity and unwinds double-stranded RNA. In Salmonella agona (strain SL483), this protein is ATP-dependent RNA helicase RhlB.